Reading from the N-terminus, the 162-residue chain is Interleukin-15 (162 aa).

Residues 1–29 (MRILKPYLRSTSIQCYLCLLLNSHFLTEA) form the signal peptide. The propeptide occupies 30–48 (GIHVFILGCISAGLPKTEA). 2 disulfide bridges follow: Cys83–Cys133 and Cys90–Cys136. N-linked (GlcNAc...) asparagine glycosylation is found at Asn113, Asn121, and Asn127.

This sequence belongs to the IL-15/IL-21 family.

It localises to the secreted. Cytokine that plays a major role in the development of inflammatory and protective immune responses to microbial invaders and parasites by modulating immune cells of both the innate and adaptive immune systems. Stimulates the proliferation of natural killer cells, T-cells and B-cells and promotes the secretion of several cytokines. In monocytes, induces the production of IL8 and monocyte chemotactic protein 1/CCL2, two chemokines that attract neutrophils and monocytes respectively to sites of infection. Unlike most cytokines, which are secreted in soluble form, IL15 is expressed in association with its high affinity IL15RA on the surface of IL15-producing cells and delivers signals to target cells that express IL2RB and IL2RG receptor subunits. Binding to its receptor triggers the phosphorylation of JAK1 and JAK3 and the recruitment and subsequent phosphorylation of signal transducer and activator of transcription-3/STAT3 and STAT5. In mast cells, induces the rapid tyrosine phosphorylation of STAT6 and thereby controls mast cell survival and release of cytokines such as IL4. The sequence is that of Interleukin-15 (IL15) from Ovis aries (Sheep).